The chain runs to 284 residues: Cysteine-rich repeat secretory protein 8 (284 aa).

An N-terminal signal peptide occupies residues 1–27; sequence MATFIRFTAPLFCFFFLFSLFSHQTMS. 2 consecutive Gnk2-homologous domains span residues 32 to 136 and 151 to 259; these read MATF…NVSF and SLAT…TTGL.

It belongs to the cysteine-rich repeat secretory protein family.

It localises to the secreted. The chain is Cysteine-rich repeat secretory protein 8 (CRRSP8) from Arabidopsis thaliana (Mouse-ear cress).